Here is a 349-residue protein sequence, read N- to C-terminus: Protein-glutamate methylesterase/protein-glutamine glutaminase (349 aa).

One can recognise a Response regulatory domain in the interval 5–122 (RVLSVDDSAL…REGMLAYSEM (118 aa)). A 4-aspartylphosphate modification is found at D56. One can recognise a CheB-type methylesterase domain in the interval 152–344 (LLSSEKLIAI…QQMLAKISAG (193 aa)). Residues S164, H190, and D286 contribute to the active site.

Belongs to the CheB family. Phosphorylated by CheA. Phosphorylation of the N-terminal regulatory domain activates the methylesterase activity.

Its subcellular location is the cytoplasm. It carries out the reaction [protein]-L-glutamate 5-O-methyl ester + H2O = L-glutamyl-[protein] + methanol + H(+). The enzyme catalyses L-glutaminyl-[protein] + H2O = L-glutamyl-[protein] + NH4(+). Functionally, involved in chemotaxis. Part of a chemotaxis signal transduction system that modulates chemotaxis in response to various stimuli. Catalyzes the demethylation of specific methylglutamate residues introduced into the chemoreceptors (methyl-accepting chemotaxis proteins or MCP) by CheR. Also mediates the irreversible deamidation of specific glutamine residues to glutamic acid. The sequence is that of Protein-glutamate methylesterase/protein-glutamine glutaminase from Salmonella paratyphi A (strain ATCC 9150 / SARB42).